Consider the following 37-residue polypeptide: Large ribosomal subunit protein bL36 (37 aa).

It belongs to the bacterial ribosomal protein bL36 family.

This Beutenbergia cavernae (strain ATCC BAA-8 / DSM 12333 / CCUG 43141 / JCM 11478 / NBRC 16432 / NCIMB 13614 / HKI 0122) protein is Large ribosomal subunit protein bL36.